The primary structure comprises 68 residues: Pleurocidin-like peptide WF4 (68 aa).

Residues 1-22 (MKFTATFLMMFIFVLMVEPGEC) form the signal peptide. The propeptide occupies 48 to 68 (GEQQDLDKRAVDEDPNVIVFE).

This sequence belongs to the pleurocidin family.

The protein localises to the secreted. Antimicrobial peptide. This chain is Pleurocidin-like peptide WF4 (ple4), found in Pseudopleuronectes americanus (Winter flounder).